Here is a 218-residue protein sequence, read N- to C-terminus: Pyridoxal phosphate homeostasis protein (218 aa).

Position 25 is an N6-(pyridoxal phosphate)lysine (Lys-25).

It belongs to the pyridoxal phosphate-binding protein YggS/PROSC family.

Functionally, pyridoxal 5'-phosphate (PLP)-binding protein, which is involved in PLP homeostasis. The chain is Pyridoxal phosphate homeostasis protein from Synechocystis sp. (strain ATCC 27184 / PCC 6803 / Kazusa).